A 428-amino-acid chain; its full sequence is Histidinol dehydrogenase (428 aa).

NAD(+) is bound by residues Tyr-125, Gln-186, and Asn-209. Substrate contacts are provided by Ser-232, Gln-254, and His-257. Zn(2+) is bound by residues Gln-254 and His-257. Catalysis depends on proton acceptor residues Glu-322 and His-323. 4 residues coordinate substrate: His-323, Asp-356, Glu-410, and His-415. Asp-356 provides a ligand contact to Zn(2+). His-415 lines the Zn(2+) pocket.

Belongs to the histidinol dehydrogenase family. Zn(2+) serves as cofactor.

It catalyses the reaction L-histidinol + 2 NAD(+) + H2O = L-histidine + 2 NADH + 3 H(+). It participates in amino-acid biosynthesis; L-histidine biosynthesis; L-histidine from 5-phospho-alpha-D-ribose 1-diphosphate: step 9/9. Functionally, catalyzes the sequential NAD-dependent oxidations of L-histidinol to L-histidinaldehyde and then to L-histidine. The chain is Histidinol dehydrogenase from Lactiplantibacillus plantarum (strain ATCC BAA-793 / NCIMB 8826 / WCFS1) (Lactobacillus plantarum).